A 176-amino-acid polypeptide reads, in one-letter code: MINISINKPIQPLLIGKVGKSYGILGWINIFSFTEEQEKIFNYLPWFFFKEKNWTRIQIKNWKKYKNNFIVHIKDISDRSVVSQFTNADIIISKHTLPALKKNDYYWNDIINYKVFNIDQHYLGTVINLIRTRNNDILIVKNKLKIHQKNILIPFIDNKIIKNVNTDKKFILVQWD.

In terms of domain architecture, PRC barrel spans 102–175 (KNDYYWNDII…TDKKFILVQW (74 aa)).

This sequence belongs to the RimM family. In terms of assembly, binds ribosomal protein uS19.

Its subcellular location is the cytoplasm. Functionally, an accessory protein needed during the final step in the assembly of 30S ribosomal subunit, possibly for assembly of the head region. Essential for efficient processing of 16S rRNA. May be needed both before and after RbfA during the maturation of 16S rRNA. It has affinity for free ribosomal 30S subunits but not for 70S ribosomes. The protein is Ribosome maturation factor RimM of Buchnera aphidicola subsp. Acyrthosiphon pisum (strain APS) (Acyrthosiphon pisum symbiotic bacterium).